Here is a 299-residue protein sequence, read N- to C-terminus: Cathepsin B-like CP3 (299 aa).

An N-terminal signal peptide occupies residues 1–19 (MKLFLLAAAAFSAPALTVS). Cystine bridges form between C87–C114, C97–C140, and C133–C176. C100 is an active-site residue. Residues H244 and N265 contribute to the active site.

The protein belongs to the peptidase C1 family.

The protein resides in the vacuole. Thiol protease which is required for parasite excystation and invasion of the proximal small intestine of the human host. This Giardia intestinalis (Giardia lamblia) protein is Cathepsin B-like CP3 (CP3).